An 845-amino-acid chain; its full sequence is Protein P (845 aa).

The tract at residues 1-179 (MPLSYQHFRK…FCGSPYSWEQ (179 aa)) is terminal protein domain (TP). Residues 180–348 (ELHHGRLVIK…YCLSHLVNLL (169 aa)) form a spacer region. The polymerase/reverse transcriptase domain (RT) stretch occupies residues 349-692 (EDWGPCTEHG…YMNLYPVARQ (344 aa)). Residues 359–602 (EHHIRIPRTP…YSLNFMGYVI (244 aa)) form the Reverse transcriptase domain. The Mg(2+) site is built by Asp431, Asp553, and Asp554.

This sequence belongs to the hepadnaviridae P protein family.

It catalyses the reaction DNA(n) + a 2'-deoxyribonucleoside 5'-triphosphate = DNA(n+1) + diphosphate. It carries out the reaction Endonucleolytic cleavage to 5'-phosphomonoester.. Its activity is regulated as follows. Activated by host HSP70 and HSP40 in vitro to be able to bind the epsilon loop of the pgRNA. Because deletion of the RNase H region renders the protein partly chaperone-independent, the chaperones may be needed indirectly to relieve occlusion of the RNA-binding site by this domain. Inhibited by several reverse-transcriptase inhibitors: Lamivudine, Adefovir and Entecavir. Its function is as follows. Multifunctional enzyme that converts the viral RNA genome into dsDNA in viral cytoplasmic capsids. This enzyme displays a DNA polymerase activity that can copy either DNA or RNA templates, and a ribonuclease H (RNase H) activity that cleaves the RNA strand of RNA-DNA heteroduplexes in a partially processive 3'- to 5'-endonucleasic mode. Neo-synthesized pregenomic RNA (pgRNA) are encapsidated together with the P protein, and reverse-transcribed inside the nucleocapsid. Initiation of reverse-transcription occurs first by binding the epsilon loop on the pgRNA genome, and is initiated by protein priming, thereby the 5'-end of (-)DNA is covalently linked to P protein. Partial (+)DNA is synthesized from the (-)DNA template and generates the relaxed circular DNA (RC-DNA) genome. After budding and infection, the RC-DNA migrates in the nucleus, and is converted into a plasmid-like covalently closed circular DNA (cccDNA). The activity of P protein does not seem to be necessary for cccDNA generation, and is presumably released from (+)DNA by host nuclear DNA repair machinery. The chain is Protein P from Homo sapiens (Human).